The sequence spans 832 residues: FAST kinase domain-containing protein 1, mitochondrial (832 aa).

The RAP domain occupies 765–825 (VAIEFLDSKA…KDAWIDYLRK (61 aa)).

Belongs to the FAST kinase family.

The protein localises to the mitochondrion. Its function is as follows. May regulate the stability of some mitochondrial mRNA species. This is FAST kinase domain-containing protein 1, mitochondrial (fastkd1) from Xenopus tropicalis (Western clawed frog).